Consider the following 584-residue polypeptide: Cytochrome c oxidase subunit 1 (584 aa).

The disordered stretch occupies residues 1-25; the sequence is MTAVAPRVDGHVAPQRPEPTGHARK. The chain crosses the membrane as a helical span at residues 43–63; the sequence is IMYIIMSFSFFFLGGLMALLI. Residue H87 coordinates Fe(II)-heme a. The next 6 helical transmembrane spans lie at 90–110, 122–142, 171–191, 214–234, 259–279, and 292–312; these read VMLL…VLPL, LNAF…TGFL, MWIV…INML, IFVV…AALG, LFWF…FGIV, and FGYV…MAVW. Residues H265 and Y269 each contribute to the Cu cation site. A cross-link (1'-histidyl-3'-tyrosine (His-Tyr)) is located at residues 265–269; that stretch reads HPEVY. Positions 314 and 315 each coordinate Cu cation. 2 helical membrane-spanning segments follow: residues 316–336 and 360–380; these read MFVT…LISV and MIWS…GIML. H398 is a heme a3 binding site. 3 helical membrane passes run 399–419, 434–454, and 477–497; these read FHYT…YFWF, IHFW…HWVG, and ISTV…WNVF. H400 is a binding site for Fe(II)-heme a. A disordered region spans residues 564 to 584; the sequence is HDDINAPELGTAPALASDSSR.

Associates with subunits II, III and IV to form cytochrome c oxidase. The 4 subunit cytochrome c oxidase forms a supercomplex with the menaquinol-cytochrome c reductase complex (cytochrome bc1). It depends on Cu(2+) as a cofactor. The cofactor is heme.

The protein resides in the cell membrane. The catalysed reaction is 4 Fe(II)-[cytochrome c] + O2 + 8 H(+)(in) = 4 Fe(III)-[cytochrome c] + 2 H2O + 4 H(+)(out). The protein operates within energy metabolism; oxidative phosphorylation. Functionally, cytochrome c oxidase is the component of the respiratory chain that catalyzes the reduction of oxygen to water. Subunits 1-3 form the functional core of the enzyme complex. CO I is the catalytic subunit of the enzyme. Electrons originating in cytochrome c are transferred via the copper A center of subunit 2 and heme A of subunit 1 to the bimetallic center formed by heme A3 and copper B. This chain is Cytochrome c oxidase subunit 1 (ctaD), found in Corynebacterium glutamicum (strain ATCC 13032 / DSM 20300 / JCM 1318 / BCRC 11384 / CCUG 27702 / LMG 3730 / NBRC 12168 / NCIMB 10025 / NRRL B-2784 / 534).